A 287-amino-acid chain; its full sequence is Glutamate racemase (287 aa).

Substrate contacts are provided by residues aspartate 32–serine 33 and tyrosine 64–glycine 65. The active-site Proton donor/acceptor is the cysteine 96. Asparagine 97–threonine 98 is a binding site for substrate. Cysteine 208 serves as the catalytic Proton donor/acceptor. Threonine 209–histidine 210 provides a ligand contact to substrate.

The protein belongs to the aspartate/glutamate racemases family.

It carries out the reaction L-glutamate = D-glutamate. The protein operates within cell wall biogenesis; peptidoglycan biosynthesis. In terms of biological role, provides the (R)-glutamate required for cell wall biosynthesis. The polypeptide is Glutamate racemase (Serratia proteamaculans (strain 568)).